Reading from the N-terminus, the 607-residue chain is Glutamine--fructose-6-phosphate aminotransferase [isomerizing] (607 aa).

The active-site Nucleophile; for GATase activity is the Cys-2. In terms of domain architecture, Glutamine amidotransferase type-2 spans 2–217; sequence CGIIGIIGND…DGDWAVLTRN (216 aa). SIS domains lie at 283–422 and 455–597; these read IGID…ARGA and VCHD…VDQP. Lys-602 (for Fru-6P isomerization activity) is an active-site residue.

Homodimer.

Its subcellular location is the cytoplasm. It carries out the reaction D-fructose 6-phosphate + L-glutamine = D-glucosamine 6-phosphate + L-glutamate. In terms of biological role, catalyzes the first step in hexosamine metabolism, converting fructose-6P into glucosamine-6P using glutamine as a nitrogen source. The protein is Glutamine--fructose-6-phosphate aminotransferase [isomerizing] of Brucella suis biovar 1 (strain 1330).